A 120-amino-acid chain; its full sequence is Large ribosomal subunit protein bL19 (120 aa).

It belongs to the bacterial ribosomal protein bL19 family.

Its function is as follows. This protein is located at the 30S-50S ribosomal subunit interface and may play a role in the structure and function of the aminoacyl-tRNA binding site. This Cyanothece sp. (strain PCC 7425 / ATCC 29141) protein is Large ribosomal subunit protein bL19.